Here is a 396-residue protein sequence, read N- to C-terminus: Elongation factor Tu (396 aa).

Residues 10–206 (KPHCNIGTIG…AVDAYIPQPE (197 aa)) enclose the tr-type G domain. Positions 19 to 26 (GHVDHGKT) are G1. 19–26 (GHVDHGKT) contacts GTP. Thr-26 contributes to the Mg(2+) binding site. The G2 stretch occupies residues 60 to 64 (GITIS). Positions 81–84 (DCPG) are G3. GTP-binding positions include 81-85 (DCPGH) and 136-139 (NKVD). The G4 stretch occupies residues 136-139 (NKVD). Residues 174 to 176 (SAL) are G5.

Belongs to the TRAFAC class translation factor GTPase superfamily. Classic translation factor GTPase family. EF-Tu/EF-1A subfamily. In terms of assembly, monomer.

The protein localises to the cytoplasm. It catalyses the reaction GTP + H2O = GDP + phosphate + H(+). Functionally, GTP hydrolase that promotes the GTP-dependent binding of aminoacyl-tRNA to the A-site of ribosomes during protein biosynthesis. The polypeptide is Elongation factor Tu (Parvibaculum lavamentivorans (strain DS-1 / DSM 13023 / NCIMB 13966)).